The sequence spans 240 residues: Ribosomal RNA small subunit methyltransferase G (240 aa).

S-adenosyl-L-methionine-binding positions include glycine 79, 130–131 (AE), and arginine 149.

This sequence belongs to the methyltransferase superfamily. RNA methyltransferase RsmG family.

The protein localises to the cytoplasm. Functionally, specifically methylates the N7 position of a guanine in 16S rRNA. This is Ribosomal RNA small subunit methyltransferase G from Moorella thermoacetica (strain ATCC 39073 / JCM 9320).